We begin with the raw amino-acid sequence, 23 residues long: Nephrotoxin PsTX-115 (23 aa).

It is found in the secreted. Its subcellular location is the nematocyst. Functionally, nephrotoxin. When injected intravenously in rats, causes severe destructive glomerular changes. At 24 hours post-injection partial disruption of the glomerular basement membrane, massive thrombus formation in glomerular capillaries, severe mesangiolysis and infiltrating cells were observed in the majority of glomeruli. The chain is Nephrotoxin PsTX-115 from Phyllodiscus semoni (Night anemone).